The primary structure comprises 749 residues: Phototropin (749 aa).

Residues 7–80 form the PAS 1 domain; that stretch reads PASQLTKVLA…QKIRDAIKKG (74 aa). Residues 56-61, Arg-74, Asn-89, Asn-99, and Gln-120 contribute to the FMN site; that span reads NCRFLQ. The residue at position 57 (Cys-57) is an S-4a-FMN cysteine. Residues 81–135 enclose the PAC 1 domain; sequence EACSVRLLNYRKDGTPFWNLLTVTPIKTPDGRVSKFVGVQVDVTSKTEGKALADN. A PAS 2 domain is found at 200–273; the sequence is VALDLATTVE…DQIRAAIKEG (74 aa). The PAC 2 domain occupies 274 to 328; it reads SELTVRILNYTKAGKAFWNMFTLAPMRDQDGHARFFVGVQVDVTAQSTSPDKAPV. In terms of domain architecture, Protein kinase spans 404-712; that stretch reads FRRVKQLGAG…ANEIKSHPWF (309 aa). ATP-binding positions include 410–418 and Lys-433; that span reads LGAGDVGLV. Residue Asp-529 is the Proton acceptor of the active site. Disordered stretches follow at residues 563-591 and 729-749; these read KIGG…SSSG and PRRA…FDNY. Residues 713–749 form the AGC-kinase C-terminal domain; that stretch reads KGINWALLRHQQPPYVPRRASKAAGGSSTGGAAFDNY. Positions 734 to 749 are enriched in low complexity; it reads KAAGGSSTGGAAFDNY.

This sequence belongs to the protein kinase superfamily. AGC Ser/Thr protein kinase family. FMN is required as a cofactor. Post-translationally, autophosphorylated in response to blue light irradiation. In terms of processing, 2 molecules of FMN bind covalently to cysteines after exposure to blue light and are reversed in the dark. In terms of tissue distribution, expressed in gametes, pre-gametes and gametes generated by pre-gametes (at protein level).

Its subcellular location is the membrane. It catalyses the reaction L-seryl-[protein] + ATP = O-phospho-L-seryl-[protein] + ADP + H(+). It carries out the reaction L-threonyl-[protein] + ATP = O-phospho-L-threonyl-[protein] + ADP + H(+). Its function is as follows. Protein kinase that acts as a blue light photoreceptor. Required for non-photochemical quenching (NPQ), a mechanism that converts and dissipates the harmful excess absorbed light energy into heat and protect the photosynthetic apparatus from photo-oxidative damage. Controls the energy-dependent chlorophyll fluorescence quenching (qE) activity of chlorophyll excited states by inducing the expression of the qE effector protein LHCSR3 in high light intensities. The chain is Phototropin from Chlamydomonas reinhardtii (Chlamydomonas smithii).